The sequence spans 870 residues: Protein RRP6-like 2 (870 aa).

The 3'-5' exonuclease domain maps to 263–428; it reads VQEVKDLKEL…YIYDLIKLEL (166 aa). In terms of domain architecture, HRDC spans 479 to 559; it reads NAAQLAIVAG…RQSMQHYAAF (81 aa). 4 disordered regions span residues 583–605, 649–668, 688–775, and 821–870; these read SEKKDLHTGDVASPSLKENSSQL, GALLGNAASKKKSRTDEKVK, TEKV…EDEP, and FGEG…SFKN. Composition is skewed to basic and acidic residues over residues 720–729 and 821–834; these read SKEDGVKELK and FGEGHKGRQGKREA. The span at 840 to 849 shows a compositional bias: polar residues; the sequence is KGSTQEQSEF.

It localises to the nucleus. It is found in the nucleolus. The protein localises to the cytoplasm. In terms of biological role, acts as an important epigenetic regulator through multiple silencing mechanisms. Involved in association with RRP6L1 in the silencing of the solo LTR locus. Controls levels of non-coding RNAs (ncRNAs) from the solo LTR locus. Seems to function independently of the RNA-mediated gene silencing (RdDM) pathway. Functions redundantly with RRP6L1 in the regulation of FLC locus. Participates in the maintenance of trimethylated 'Lys-27' (H3K27me3) at FLC locus via the regulation of antisense long non-coding RNAs (lncRNAs) and the regulation of diverse antisense RNAs derived from the FLC locus. Seems not involved in the exosomal RNA degradation. May be involved in poly(A)-mediated RNA degradation. This chain is Protein RRP6-like 2, found in Arabidopsis thaliana (Mouse-ear cress).